The following is a 271-amino-acid chain: Effector CFEM6 (271 aa).

The signal sequence occupies residues Met1 to Ala17. The CFEM domain maps to Gln18–Ser111. 4 disulfide bridges follow: Cys25-Cys68, Cys29-Cys63, Cys42-Cys49, and Cys51-Cys84. Asp46 serves as a coordination point for heme. A lipid anchor (GPI-anchor amidated serine) is attached at Ser247. Residues Ser248–Leu271 constitute a propeptide, removed in mature form.

The protein belongs to the RBT5 family.

Its subcellular location is the cell membrane. The protein localises to the secreted. It is found in the host nucleus. It localises to the host cell membrane. The protein resides in the host chloroplast envelope. Functionally, appears to function during host infection, and may play a role in suppressing the host immune response. The protein is Effector CFEM6 of Marssonina brunnea f. sp. multigermtubi (strain MB_m1) (Marssonina leaf spot fungus).